Reading from the N-terminus, the 210-residue chain is Regulator of G-protein signaling 17 (210 aa).

The segment at 1-21 (MRKRQQSQNEGTPAVSQAPGN) is disordered. The region spanning 84-200 (NFDKMMKAPA…LNSQIYKSFV (117 aa)) is the RGS domain. A Phosphotyrosine modification is found at Tyr-137.

As to quaternary structure, interacts with GNAI1 and GNAQ. Interacts with GNAZ and GNAI2. Interacts with OPRM1. Forms a complex with mu-opioid receptors and G(alpha)z/i2 subunits, including GNAZ and GNAI2; the formation of this complex results in mu-opioid receptor desensitization. Interacts with HINT1. Post-translationally, N- and O-glycosylated in synapsomal membranes. Serine phosphorylated in synapsomal membranes. In terms of processing, sumoylated with SUMO1 and SUM02 in synaptosomes. The sumoylated forms act as a scaffold for sequestering mu-opioid receptor-activated G(alpha) subunits. Desumoylated by HINT1. In terms of tissue distribution, predominantly expressed in the cerebellum. Also expressed in the cortex and medulla. Weakly expressed in a number of peripheral tissues notably spleen, lung and leukocytes.

Its subcellular location is the membrane. The protein localises to the synapse. The protein resides in the synaptosome. It is found in the nucleus. It localises to the cytoplasm. Its function is as follows. Regulates G protein-coupled receptor signaling cascades, including signaling via muscarinic acetylcholine receptor CHRM2 and dopamine receptor DRD2. Inhibits signal transduction by increasing the GTPase activity of G protein alpha subunits, thereby driving them into their inactive GDP-bound form. Binds selectively to GNAZ and GNAI2 subunits, accelerates their GTPase activity and regulates their signaling activities. Negatively regulates mu-opioid receptor-mediated activation of the G-proteins. The sequence is that of Regulator of G-protein signaling 17 (RGS17) from Homo sapiens (Human).